The following is a 188-amino-acid chain: Trafficking protein particle complex subunit 5 (188 aa).

Residue serine 10 is modified to Phosphoserine.

Belongs to the TRAPP small subunits family. BET3 subfamily. Component of the multisubunit TRAPP (transport protein particle) complex, which includes at least TRAPPC2, TRAPPC2L, TRAPPC3, TRAPPC3L, TRAPPC4, TRAPPC5, TRAPPC8, TRAPPC9, TRAPPC10, TRAPPC11 and TRAPPC12.

The protein localises to the golgi apparatus. The protein resides in the cis-Golgi network. Its subcellular location is the endoplasmic reticulum. In terms of biological role, may play a role in vesicular transport from endoplasmic reticulum to Golgi. The sequence is that of Trafficking protein particle complex subunit 5 (TRAPPC5) from Bos taurus (Bovine).